A 289-amino-acid chain; its full sequence is Doxorubicin resistance ABC transporter permease protein DrrB (289 aa).

The ABC transmembrane type-2 domain maps to 47–282; the sequence is GEVLTTVGAP…FVVILALSST (236 aa). 6 helical membrane-spanning segments follow: residues 49 to 69, 88 to 108, 138 to 158, 166 to 186, 199 to 219, and 266 to 286; these read VLTTVGAPIIFMVGFYIPFAI, QYITPLVTLQAVSFAAIGSGF, WVAVDRCFTGLVISLVCGYVI, ALYIVGFCLLVIAIGAVLSFA, AMLPLLSLPILIFGLLSIGLM, and TLTWLFAFVVILALSSTIVLA.

This sequence belongs to the ABC-2 integral membrane protein family. As to quaternary structure, the complex is composed of two ATP-binding proteins (DrrA) and two transmembrane proteins (DrrB and DrrC).

The protein localises to the cell membrane. Its function is as follows. Part of the ABC transporter complex DrrABC involved in doxorubicin resistance. Probably responsible for the translocation of the substrate across the membrane. The polypeptide is Doxorubicin resistance ABC transporter permease protein DrrB (drrB) (Mycobacterium tuberculosis (strain CDC 1551 / Oshkosh)).